The following is a 283-amino-acid chain: Small aggregate formation protein (283 aa).

The protein resides in the cytoplasm. Functionally, knockout of the gene for this protein causes small aggregate formation. May regulate the secretion or processing of a secreted factor that regulates aggregate size. The sequence is that of Small aggregate formation protein (smlA) from Dictyostelium discoideum (Social amoeba).